The primary structure comprises 159 residues: Immunoglobulin J chain (159 aa).

The first 22 residues, 1-22 (MKNHLLFWGVLAVFIKAVHVKA), serve as a signal peptide directing secretion. At Q23 the chain carries Pyrrolidone carboxylic acid. 3 disulfide bridges follow: C35/C123, C94/C114, and C131/C156. N71 carries an N-linked (GlcNAc...) (complex) asparagine glycan.

Part of the secretory IgA (sIgA) complex that consists of two, four or five IgA monomers, and two additional non-Ig polypeptides, namely the JCHAIN and the secretory component (the proteolytic product of PIGR). Part of the secretory IgM (sIgM) complex that consists of five IgM monomers, and two additional non-Ig polypeptides, namely the JCHAIN and the secretory component (the proteolytic product of PIGR). JCHAIN-containing IgM interacts (via CH4 domain) with FCRM (via Ig-like domain).

The protein localises to the secreted. Functionally, serves to link two monomer units of either IgM or IgA. In the case of IgM, the J chain-joined dimer is a nucleating unit for the IgM pentamer, and in the case of IgA it induces dimers and/or larger polymers. It also helps to bind these immunoglobulins to secretory component. In Homo sapiens (Human), this protein is Immunoglobulin J chain.